The sequence spans 261 residues: Indole-3-glycerol phosphate synthase (261 aa).

This sequence belongs to the TrpC family.

It carries out the reaction 1-(2-carboxyphenylamino)-1-deoxy-D-ribulose 5-phosphate + H(+) = (1S,2R)-1-C-(indol-3-yl)glycerol 3-phosphate + CO2 + H2O. Its pathway is amino-acid biosynthesis; L-tryptophan biosynthesis; L-tryptophan from chorismate: step 4/5. In Burkholderia pseudomallei (strain 1710b), this protein is Indole-3-glycerol phosphate synthase.